A 199-amino-acid chain; its full sequence is NAD(P)H dehydrogenase (quinone) (199 aa).

The Flavodoxin-like domain maps to 4 to 190; sequence VLVLYYSTYG…DGARFLGQHV (187 aa). FMN is bound by residues 10–15 and 78–80; these read STYGHI and TRF. An NAD(+)-binding site is contributed by Y12. W98 lines the substrate pocket. Residues 113 to 119 and H134 each bind FMN; that span reads STATQHG.

This sequence belongs to the WrbA family. FMN serves as cofactor.

It carries out the reaction a quinone + NADH + H(+) = a quinol + NAD(+). It catalyses the reaction a quinone + NADPH + H(+) = a quinol + NADP(+). The protein is NAD(P)H dehydrogenase (quinone) of Gluconacetobacter diazotrophicus (strain ATCC 49037 / DSM 5601 / CCUG 37298 / CIP 103539 / LMG 7603 / PAl5).